We begin with the raw amino-acid sequence, 304 residues long: MRHFLTLDDFSKDEILQMINLAGKIKKEAKVREFKPYLKDQTLAMIFEKSSTRTRVSFEVGMYQLGGHALFLSANDLQIGRGEPIKDTARVISSMCDMAMLRVNRHETLEEFAKFSQNPVINGLSDKFHPVQLMADYLTMRERGSGEKIAYIGDGNNMAHSWLMLASKLGLELRIATPKGYEPDAKILEKAQQNAKISGAKIYLSNEPKEAVSGADVVTTDTWVSMGQEAQKEKRLREFAGFCVDENLMSLAAKNAIFLHCLPAYRGYEVSEAVFEAHADEIFAEAQNRLHAQKGVMVWLNDKR.

Carbamoyl phosphate contacts are provided by residues 51–54 (STRT), Gln-78, Arg-102, and 129–132 (HPVQ). L-ornithine-binding positions include Asn-157, Asp-221, and 225 to 226 (SM). Residues 261–262 (CL) and Arg-289 contribute to the carbamoyl phosphate site.

This sequence belongs to the aspartate/ornithine carbamoyltransferase superfamily. OTCase family.

Its subcellular location is the cytoplasm. It catalyses the reaction carbamoyl phosphate + L-ornithine = L-citrulline + phosphate + H(+). It participates in amino-acid degradation; L-arginine degradation via ADI pathway; carbamoyl phosphate from L-arginine: step 2/2. In terms of biological role, reversibly catalyzes the transfer of the carbamoyl group from carbamoyl phosphate (CP) to the N(epsilon) atom of ornithine (ORN) to produce L-citrulline. This chain is Ornithine carbamoyltransferase, found in Campylobacter curvus (strain 525.92).